Here is a 90-residue protein sequence, read N- to C-terminus: UPF0237 protein NMB1653 (90 aa).

An ACT domain is found at 5 to 83; it reads VITVIGKDRV…LDIRMQNEEI (79 aa).

This sequence belongs to the UPF0237 family.

In Neisseria meningitidis serogroup B (strain ATCC BAA-335 / MC58), this protein is UPF0237 protein NMB1653.